Consider the following 250-residue polypeptide: Anamorsin homolog 1 (250 aa).

Residues 1–104 are N-terminal SAM-like domain; sequence MNLKITINQQ…KKLNIPQQEF (104 aa). Residues 104 to 149 are linker; the sequence is FNNCYGKYDYIEQKFQNQINFFKQVDINGKQEIIDENELLDDGVQV. The [2Fe-2S] cluster site is built by Cys155, Cys162, Cys165, and Cys167. Residues 155–167 are fe-S binding site A; it reads CASKPRACANCTC. Cys193, Cys196, Cys204, and Cys207 together coordinate [4Fe-4S] cluster. Short sequence motifs (cx2C motif) lie at residues 193–196 and 204–207; these read CGSC and CANC. The tract at residues 193-207 is fe-S binding site B; that stretch reads CGSCYLGDAFRCANC.

The protein belongs to the anamorsin family. Monomer. The cofactor is [2Fe-2S] cluster. Requires [4Fe-4S] cluster as cofactor.

It localises to the cytoplasm. Its subcellular location is the mitochondrion intermembrane space. Functionally, component of the cytosolic iron-sulfur (Fe-S) protein assembly (CIA) machinery. Required for the maturation of extramitochondrial Fe-S proteins. Part of an electron transfer chain functioning in an early step of cytosolic Fe-S biogenesis, facilitating the de novo assembly of a [4Fe-4S] cluster on the cytosolic Fe-S scaffold complex. Electrons are transferred from NADPH via a FAD- and FMN-containing diflavin oxidoreductase. Together with the diflavin oxidoreductase, also required for the assembly of the diferric tyrosyl radical cofactor of ribonucleotide reductase (RNR), probably by providing electrons for reduction during radical cofactor maturation in the catalytic small subunit. The sequence is that of Anamorsin homolog 1 from Paramecium tetraurelia.